The chain runs to 173 residues: NADH-ubiquinone oxidoreductase chain 6 (173 aa).

6 helical membrane passes run 1–21, 27–47, 48–68, 85–105, 106–126, and 139–159; these read MTYFVLFLGLCFVLGGLAVAS, YGVVGLVLASVAGCGWLLSLG, VSFVSLVLFMVYLGGMLVVFV, WGVVGYGVGFVVVLVAGLIVG, GSIGSLDFGVVTVDSVGMFSV, and CGVGMLLVAGWGLLLTLFVVL.

Belongs to the complex I subunit 6 family.

Its subcellular location is the mitochondrion membrane. The catalysed reaction is a ubiquinone + NADH + 5 H(+)(in) = a ubiquinol + NAD(+) + 4 H(+)(out). In terms of biological role, core subunit of the mitochondrial membrane respiratory chain NADH dehydrogenase (Complex I) that is believed to belong to the minimal assembly required for catalysis. Complex I functions in the transfer of electrons from NADH to the respiratory chain. The immediate electron acceptor for the enzyme is believed to be ubiquinone. In Aethia psittacula (Parakeet auklet), this protein is NADH-ubiquinone oxidoreductase chain 6 (MT-ND6).